The chain runs to 492 residues: 2-succinylbenzoate--CoA ligase (492 aa).

The protein belongs to the ATP-dependent AMP-binding enzyme family. MenE subfamily.

It catalyses the reaction 2-succinylbenzoate + ATP + CoA = 2-succinylbenzoyl-CoA + AMP + diphosphate. The protein operates within quinol/quinone metabolism; 1,4-dihydroxy-2-naphthoate biosynthesis; 1,4-dihydroxy-2-naphthoate from chorismate: step 5/7. It participates in quinol/quinone metabolism; menaquinone biosynthesis. Its function is as follows. Converts 2-succinylbenzoate (OSB) to 2-succinylbenzoyl-CoA (OSB-CoA). In Staphylococcus aureus (strain USA300 / TCH1516), this protein is 2-succinylbenzoate--CoA ligase.